Here is a 1064-residue protein sequence, read N- to C-terminus: Probable ATP-dependent DNA helicase CHR23 (1064 aa).

A Helicase ATP-binding domain is found at 398 to 563; sequence VSLYNNDYNG…WSLLNFLLPH (166 aa). Residue 411-418 participates in ATP binding; it reads DEMGLGKT. Residues 513–516 carry the DEAH box motif; it reads DEGH. Positions 699-866 constitute a Helicase C-terminal domain; it reads LLDRLLPKLK…DRREMLEEIM (168 aa). Disordered regions lie at residues 924–955 and 967–1064; these read AYTS…AVYS and MESE…SKRN. Residues 1002–1014 show a composition bias toward acidic residues; that stretch reads ESDEEKEEEEEER. Over residues 1048–1064 the composition is skewed to low complexity; that stretch reads SSPNSRGKGSSKGSKRN.

It belongs to the helicase family. Expressed in embryos, root apical meristem (RAM) and shoot apical meristem (SAM).

It is found in the nucleus. The enzyme catalyses ATP + H2O = ADP + phosphate + H(+). Functionally, probable chromatin-remodeling factor that is functionally redundant with CHR12 in root and shoot stem cell initiation and root apical meristem (RAM) and shoot apical meristem (SAM) maintenance. Can associate with the promoter region of WOX5. May promote seed maturation and repress initiation of germination. May repress plant growth. The chain is Probable ATP-dependent DNA helicase CHR23 from Arabidopsis thaliana (Mouse-ear cress).